The following is a 189-amino-acid chain: Orotate phosphoribosyltransferase (189 aa).

5-phospho-alpha-D-ribose 1-diphosphate contacts are provided by residues Arg99, Lys100, Lys103, His105, and 126-134; that span reads EDVITTGGS. Orotate contacts are provided by Thr130 and Arg158.

This sequence belongs to the purine/pyrimidine phosphoribosyltransferase family. PyrE subfamily. As to quaternary structure, homodimer. Mg(2+) is required as a cofactor.

The enzyme catalyses orotidine 5'-phosphate + diphosphate = orotate + 5-phospho-alpha-D-ribose 1-diphosphate. Its pathway is pyrimidine metabolism; UMP biosynthesis via de novo pathway; UMP from orotate: step 1/2. In terms of biological role, catalyzes the transfer of a ribosyl phosphate group from 5-phosphoribose 1-diphosphate to orotate, leading to the formation of orotidine monophosphate (OMP). In Thermosynechococcus vestitus (strain NIES-2133 / IAM M-273 / BP-1), this protein is Orotate phosphoribosyltransferase.